We begin with the raw amino-acid sequence, 70 residues long: Large ribosomal subunit protein bL31 (70 aa).

Cys-16, Cys-18, Cys-37, and Cys-40 together coordinate Zn(2+).

The protein belongs to the bacterial ribosomal protein bL31 family. Type A subfamily. As to quaternary structure, part of the 50S ribosomal subunit. It depends on Zn(2+) as a cofactor.

In terms of biological role, binds the 23S rRNA. In Haemophilus influenzae (strain PittEE), this protein is Large ribosomal subunit protein bL31.